The primary structure comprises 335 residues: Methionine aminopeptidase 1D, mitochondrial (335 aa).

The transit peptide at 1–19 (MAAPIGVPLLVRGGCQRIL) directs the protein to the mitochondrion. Residue H161 coordinates substrate. A divalent metal cation-binding residues include D178, D189, and H252. H259 provides a ligand contact to substrate. E284 and E315 together coordinate a divalent metal cation.

It belongs to the peptidase M24A family. Methionine aminopeptidase type 1 subfamily. Co(2+) is required as a cofactor. The cofactor is Zn(2+). Mn(2+) serves as cofactor. Requires Fe(2+) as cofactor.

It localises to the mitochondrion. The enzyme catalyses Release of N-terminal amino acids, preferentially methionine, from peptides and arylamides.. Its function is as follows. Removes the N-terminal methionine from nascent proteins. The N-terminal methionine is often cleaved when the second residue in the primary sequence is small and uncharged (Met-Ala-, Cys, Gly, Pro, Ser, Thr, or Val). Requires deformylation of the N(alpha)-formylated initiator methionine before it can be hydrolyzed. The protein is Methionine aminopeptidase 1D, mitochondrial (Metap1d) of Mus musculus (Mouse).